We begin with the raw amino-acid sequence, 430 residues long: Adenylosuccinate synthetase (430 aa).

GTP contacts are provided by residues 12–18 (GDEGKGK) and 40–42 (GHT). Residue Asp13 is the Proton acceptor of the active site. Mg(2+) contacts are provided by Asp13 and Gly40. Residues 13-16 (DEGK), 38-41 (NAGH), Thr128, Arg142, Gln223, Thr238, and Arg302 each bind IMP. His41 functions as the Proton donor in the catalytic mechanism. 298–304 (TTTGRPR) contributes to the substrate binding site. GTP is bound by residues Arg304, 330 to 332 (SID), and 412 to 414 (SVG).

It belongs to the adenylosuccinate synthetase family. Homodimer. It depends on Mg(2+) as a cofactor.

The protein resides in the cytoplasm. The catalysed reaction is IMP + L-aspartate + GTP = N(6)-(1,2-dicarboxyethyl)-AMP + GDP + phosphate + 2 H(+). The protein operates within purine metabolism; AMP biosynthesis via de novo pathway; AMP from IMP: step 1/2. Its function is as follows. Plays an important role in the de novo pathway of purine nucleotide biosynthesis. Catalyzes the first committed step in the biosynthesis of AMP from IMP. This chain is Adenylosuccinate synthetase, found in Streptococcus suis (strain 98HAH33).